We begin with the raw amino-acid sequence, 368 residues long: UDP-N-acetylglucosamine--N-acetylmuramyl-(pentapeptide) pyrophosphoryl-undecaprenol N-acetylglucosamine transferase (368 aa).

Residues 11-13, N123, R164, S188, I250, and Q295 contribute to the UDP-N-acetyl-alpha-D-glucosamine site; that span reads TGG.

It belongs to the glycosyltransferase 28 family. MurG subfamily.

The protein resides in the cell inner membrane. The enzyme catalyses di-trans,octa-cis-undecaprenyl diphospho-N-acetyl-alpha-D-muramoyl-L-alanyl-D-glutamyl-meso-2,6-diaminopimeloyl-D-alanyl-D-alanine + UDP-N-acetyl-alpha-D-glucosamine = di-trans,octa-cis-undecaprenyl diphospho-[N-acetyl-alpha-D-glucosaminyl-(1-&gt;4)]-N-acetyl-alpha-D-muramoyl-L-alanyl-D-glutamyl-meso-2,6-diaminopimeloyl-D-alanyl-D-alanine + UDP + H(+). It functions in the pathway cell wall biogenesis; peptidoglycan biosynthesis. Its function is as follows. Cell wall formation. Catalyzes the transfer of a GlcNAc subunit on undecaprenyl-pyrophosphoryl-MurNAc-pentapeptide (lipid intermediate I) to form undecaprenyl-pyrophosphoryl-MurNAc-(pentapeptide)GlcNAc (lipid intermediate II). The polypeptide is UDP-N-acetylglucosamine--N-acetylmuramyl-(pentapeptide) pyrophosphoryl-undecaprenol N-acetylglucosamine transferase (Solidesulfovibrio magneticus (strain ATCC 700980 / DSM 13731 / RS-1) (Desulfovibrio magneticus)).